The primary structure comprises 132 residues: Large ribosomal subunit protein uL24 (132 aa).

It belongs to the universal ribosomal protein uL24 family. As to quaternary structure, part of the 50S ribosomal subunit.

Functionally, one of two assembly initiator proteins, it binds directly to the 5'-end of the 23S rRNA, where it nucleates assembly of the 50S subunit. Its function is as follows. One of the proteins that surrounds the polypeptide exit tunnel on the outside of the subunit. The polypeptide is Large ribosomal subunit protein uL24 (Synechococcus sp. (strain JA-2-3B'a(2-13)) (Cyanobacteria bacterium Yellowstone B-Prime)).